Consider the following 498-residue polypeptide: Lysine--tRNA ligase (498 aa).

Positions 409 and 416 each coordinate Mg(2+).

This sequence belongs to the class-II aminoacyl-tRNA synthetase family. Homodimer. The cofactor is Mg(2+).

The protein resides in the cytoplasm. It catalyses the reaction tRNA(Lys) + L-lysine + ATP = L-lysyl-tRNA(Lys) + AMP + diphosphate. This Teredinibacter turnerae (strain ATCC 39867 / T7901) protein is Lysine--tRNA ligase.